The chain runs to 443 residues: C4-dicarboxylate transport protein (443 aa).

A run of 9 helical transmembrane segments spans residues 17–37 (PFYS…ILLG), 57–77 (LVKM…IAGM), 92–112 (LYFL…ANVV), 139–159 (EQSI…GAFA), 161–181 (GDIL…AMVG), 201–221 (LVAI…AFTI), 234–254 (MLIG…LGAV), 320–340 (IYMT…LSWG), and 368–388 (AATL…ILGI).

This sequence belongs to the dicarboxylate/amino acid:cation symporter (DAACS) (TC 2.A.23) family.

The protein localises to the cell inner membrane. In terms of biological role, responsible for the transport of dicarboxylates such as succinate, fumarate, and malate from the periplasm across the membrane. In Rhizobium leguminosarum bv. trifolii (strain WSM2304), this protein is C4-dicarboxylate transport protein.